The chain runs to 271 residues: Putative glucose-6-phosphate 1-epimerase (271 aa).

Residues Arg71 and Arg93 each coordinate substrate. His151 is an active-site residue. Substrate is bound at residue Asp193. The active site involves Glu249.

This sequence belongs to the glucose-6-phosphate 1-epimerase family.

The enzyme catalyses alpha-D-glucose 6-phosphate = beta-D-glucose 6-phosphate. The protein is Putative glucose-6-phosphate 1-epimerase of Haemophilus influenzae (strain ATCC 51907 / DSM 11121 / KW20 / Rd).